Reading from the N-terminus, the 675-residue chain is Sodium/myo-inositol cotransporter 2 (675 aa).

Over 1–27 (MESGTSSPQPPQLDPLDAFPQKGLEPG) the chain is Extracellular. A helical membrane pass occupies residues 28-48 (DIAVLVLYFLFVLAVGLWSTV). The Cytoplasmic portion of the chain corresponds to 49–65 (KTKRDTVKGYFLAGGDM). Residues 66-88 (VWWPVGASLFASNVGSGHFIGLA) form a helical membrane-spanning segment. Topologically, residues 89–102 (GSGAATGISVSAYE) are extracellular. A helical transmembrane segment spans residues 103–123 (LNGLFSVLMLAWIFLPIYIAG). Over 124–135 (QVTTMPEYLRKR) the chain is Cytoplasmic. Residues 136–156 (FGGIRIPIILAVLYLFIYIFT) traverse the membrane as a helical segment. Residues 157–180 (KISVDMYAGAIFIQQSLHLDLYLA) are Extracellular-facing. The helical transmembrane segment at 181–201 (IVGLLAITAVYTVAGGLAAVI) threads the bilayer. Over 202 to 208 (YTDALQT) the chain is Cytoplasmic. A helical transmembrane segment spans residues 209 to 229 (LIMLIGALTLMGYSFAAVGGM). The Extracellular segment spans residues 230-272 (EGLKEKYFLALASNRSENSSCGLPREDAFHIFRDPLTSDLPWP). The chain crosses the membrane as a helical span at residues 273–293 (GVLFGMSIPSLWYWCTDQVIV). At 294–308 (QRTLAAKNLSHAKGG) the chain is on the cytoplasmic side. Residues 309–329 (ALMAAYLKVLPLFIMVFPGMV) form a helical membrane-spanning segment. Residues 330 to 375 (SRILFPDQVACADPEICQKICSNPSGCSDIAYPKLVLELLPTGLRG) lie on the Extracellular side of the membrane. The chain crosses the membrane as a helical span at residues 376–396 (LMMAVMVAALMSSLTSIFNSA). Topologically, residues 397–418 (STIFTMDLWNHLRPRASEKELM) are cytoplasmic. A helical membrane pass occupies residues 419–439 (IVGRVFVLLLVLVSILWIPVV). Residues 440–446 (QASQGGQ) are Extracellular-facing. Residues 447-467 (LFIYIQSISSYLQPPVAVVFI) traverse the membrane as a helical segment. Topologically, residues 468–479 (MGCFWKRTNEKG) are cytoplasmic. A helical transmembrane segment spans residues 480 to 500 (AFWGLISGLLLGLVRLVLDFI). Topologically, residues 501–521 (YVQPRCDQPDERPVLVKSIHY) are extracellular. A helical transmembrane segment spans residues 522–542 (LYFSMILSTVTLITVSTVSWF). Over 543–654 (TEPPSKEMVS…SLEENPLVKT (112 aa)) the chain is Cytoplasmic. A helical membrane pass occupies residues 655–675 (LLDVNLIFCVSCAIFIWGYFA).

It belongs to the sodium:solute symporter (SSF) (TC 2.A.21) family. In terms of tissue distribution, highest expression in heart, skeletal muscle, kidney, liver and placenta. Weaker expression in brain, colon, spleen, lung and peripheral blood leukocytes.

Its subcellular location is the membrane. The protein localises to the apical cell membrane. The catalysed reaction is myo-inositol(out) + 2 Na(+)(out) = myo-inositol(in) + 2 Na(+)(in). It carries out the reaction 1D-chiro-inositol(out) + 2 Na(+)(out) = 1D-chiro-inositol(in) + 2 Na(+)(in). It catalyses the reaction D-glucose(out) + 2 Na(+)(out) = D-glucose(in) + 2 Na(+)(in). The enzyme catalyses D-xylose(out) + 2 Na(+)(out) = D-xylose(in) + 2 Na(+)(in). MI transport activity inhibited by D-chiro-inositol (DCI), phlorizin (Pz) and sodium (Na(+)). Insulin increases D-chiro-inositol uptake. Its function is as follows. Involved in the sodium-dependent cotransport of myo-inositol (MI) with a Na(+):MI stoichiometry of 2:1. Exclusively responsible for apical MI transport and absorption in intestine. Can also transport D-chiro-inositol (DCI) but not L-fucose. Exhibits stereospecific cotransport of both D-glucose and D-xylose. May induce apoptosis through the TNF-alpha, PDCD1 pathway. May play a role in the regulation of MI concentration in serum, involving reabsorption in at least the proximal tubule of the kidney. This chain is Sodium/myo-inositol cotransporter 2, found in Homo sapiens (Human).